The following is a 435-amino-acid chain: Xylose isomerase (435 aa).

Catalysis depends on residues His-100 and Asp-103. Mg(2+) is bound by residues Glu-231, Glu-267, His-270, Asp-295, Asp-306, Asp-308, and Asp-338.

This sequence belongs to the xylose isomerase family. In terms of assembly, homotetramer. The cofactor is Mg(2+).

Its subcellular location is the cytoplasm. It carries out the reaction alpha-D-xylose = alpha-D-xylulofuranose. The sequence is that of Xylose isomerase from Brucella suis (strain ATCC 23445 / NCTC 10510).